The sequence spans 629 residues: tRNA uridine 5-carboxymethylaminomethyl modification enzyme MnmG (629 aa).

FAD-binding positions include 13–18 (GGGHAG), valine 125, and serine 180. Position 273–287 (273–287 (GPRYCPSIEDKVMRF)) interacts with NAD(+). Glutamine 370 contributes to the FAD binding site.

The protein belongs to the MnmG family. As to quaternary structure, homodimer. Heterotetramer of two MnmE and two MnmG subunits. FAD is required as a cofactor.

It is found in the cytoplasm. NAD-binding protein involved in the addition of a carboxymethylaminomethyl (cmnm) group at the wobble position (U34) of certain tRNAs, forming tRNA-cmnm(5)s(2)U34. The sequence is that of tRNA uridine 5-carboxymethylaminomethyl modification enzyme MnmG from Escherichia coli O45:K1 (strain S88 / ExPEC).